The primary structure comprises 130 residues: Small ribosomal subunit protein uS8 (130 aa).

Belongs to the universal ribosomal protein uS8 family. In terms of assembly, part of the 30S ribosomal subunit. Contacts proteins S5 and S12.

In terms of biological role, one of the primary rRNA binding proteins, it binds directly to 16S rRNA central domain where it helps coordinate assembly of the platform of the 30S subunit. The sequence is that of Small ribosomal subunit protein uS8 from Opitutus terrae (strain DSM 11246 / JCM 15787 / PB90-1).